We begin with the raw amino-acid sequence, 334 residues long: Phosphoribosylformylglycinamidine cyclo-ligase (334 aa).

This sequence belongs to the AIR synthase family.

It localises to the cytoplasm. The enzyme catalyses 2-formamido-N(1)-(5-O-phospho-beta-D-ribosyl)acetamidine + ATP = 5-amino-1-(5-phospho-beta-D-ribosyl)imidazole + ADP + phosphate + H(+). It participates in purine metabolism; IMP biosynthesis via de novo pathway; 5-amino-1-(5-phospho-D-ribosyl)imidazole from N(2)-formyl-N(1)-(5-phospho-D-ribosyl)glycinamide: step 2/2. This chain is Phosphoribosylformylglycinamidine cyclo-ligase, found in Pyrococcus abyssi (strain GE5 / Orsay).